The chain runs to 183 residues: Probable adenylyl-sulfate kinase (183 aa).

17–24 serves as a coordination point for ATP; sequence GLPGSGKT. The active-site Phosphoserine intermediate is S91.

This sequence belongs to the APS kinase family.

The catalysed reaction is adenosine 5'-phosphosulfate + ATP = 3'-phosphoadenylyl sulfate + ADP + H(+). Its pathway is sulfur metabolism; hydrogen sulfide biosynthesis; sulfite from sulfate: step 2/3. In terms of biological role, catalyzes the synthesis of activated sulfate. The protein is Probable adenylyl-sulfate kinase (cysC) of Aeropyrum pernix (strain ATCC 700893 / DSM 11879 / JCM 9820 / NBRC 100138 / K1).